A 159-amino-acid polypeptide reads, in one-letter code: Ribosomal RNA large subunit methyltransferase H (159 aa).

Residues L76, G108, and 127–132 (FSKMTF) contribute to the S-adenosyl-L-methionine site.

It belongs to the RNA methyltransferase RlmH family. Homodimer.

Its subcellular location is the cytoplasm. It catalyses the reaction pseudouridine(1915) in 23S rRNA + S-adenosyl-L-methionine = N(3)-methylpseudouridine(1915) in 23S rRNA + S-adenosyl-L-homocysteine + H(+). In terms of biological role, specifically methylates the pseudouridine at position 1915 (m3Psi1915) in 23S rRNA. The chain is Ribosomal RNA large subunit methyltransferase H from Staphylococcus aureus (strain MSSA476).